The primary structure comprises 5112 residues: Malformin synthetase mlfA (5112 aa).

Residues 225–616 form an adenylation 1 region; sequence ERHAANRPHS…CGRADTQVKL (392 aa). One can recognise a Carrier 1 domain in the interval 757–830; that stretch reads SRLEQEIQLA…EAASLAEVQE (74 aa). S791 carries the post-translational modification O-(pantetheine 4'-phosphoryl)serine. Residues 868 to 1299 are condensation 1; it reads EDVFPCTTMQ…ALDSLTLLQA (432 aa). An adenylation 2 region spans residues 1327–1716; that stretch reads DRRVTRQPDT…GRKDTQVKLR (390 aa). The Carrier 2 domain maps to 1854–1931; that stretch reads TAASELERTL…QLAAELGESP (78 aa). O-(pantetheine 4'-phosphoryl)serine is present on S1891. Disordered stretches follow at residues 1926-1961 and 1994-2034; these read ELGE…DGVD and GGSS…VPEP. Composition is skewed to low complexity over residues 1930–1941 and 1994–2012; these read SPRSSTSSASSS and GGSS…SSSS. The tract at residues 2064 to 2479 is condensation 2; the sequence is EDIYPATALQ…AVSYSDKQTL (416 aa). The tract at residues 2502–2894 is adenylation 3; that stretch reads IRTPHAPAVC…IGRRDGQVKL (393 aa). The Carrier 3 domain maps to 3030 to 3106; the sequence is RPTTAKECEM…QLLFHLRNAK (77 aa). O-(pantetheine 4'-phosphoryl)serine is present on S3067. 2 condensation regions span residues 3122–3586 and 3607–4044; these read WVDL…TYEQ and NIYP…EQLV. The interval 4069–4459 is adenylation 4; the sequence is HSSRQAVCAW…VGRKDNQIKF (391 aa). In terms of domain architecture, Carrier 4 spans 4593–4669; the sequence is MPSTEAECIM…DLARHNSLVQ (77 aa). S4630 carries the post-translational modification O-(pantetheine 4'-phosphoryl)serine. Residues 4724–5106 form a condensation 5 region; that stretch reads IVVDIPGRIS…VEKVVALLRD (383 aa).

This sequence belongs to the NRP synthetase family.

It participates in secondary metabolite biosynthesis. Functionally, nonribosomal peptide synthetase; part of the gene cluster that mediates the biosynthesis of malformins, cyclic pentapeptides with a disulfide bond between 2 consecutive cysteins, that show potential anti-tumor as well as antimalarial and antitrypanosomal properties. The nonribosomal peptide synthetase mlfA is responsible of the formation of the cyclic pentapeptide. MlfA probably acts iteratively on one amino acid and possesses multiple amino acid specificities since it is involved in the biosynthesis of multiple malformins, including malformin C and malformin A2. Malformin C corresponds to a cyclo[D-Cys-D-Cys-Val-D-Leu-Val] pentapeptide whereas malformin A2 corresponds to a cyclo[D-Cys-D-Cys-Val-D-Leu-Ile] pentapeptide. The malformin biosynthesis clusters in malformin-producing fungi also contain enzymes involved in the formation of the disulfide bond between the two consecutive cysteins within malformins, in addition to additional tailoring enzymes such as methyltransferases or oxidoreductases. They are also composed of up to 4 major facilitator superfamily transporters, and transcription factors probably involved in the regulation of the expression of those clusters. The protein is Malformin synthetase mlfA of Aspergillus brasiliensis (strain CBS 101740 / IMI 381727 / IBT 21946).